Here is a 123-residue protein sequence, read N- to C-terminus: uncharacterized protein (123 aa).

The segment covering 31 to 57 has biased composition (basic and acidic residues); the sequence is KLRTEAKKSKDKERTKEKEKHESLAKE. The disordered stretch occupies residues 31–58; sequence KLRTEAKKSKDKERTKEKEKHESLAKEK. The chain crosses the membrane as a helical span at residues 91–111; sequence IIIFLLILLVSGLMVGIFFGI.

The protein resides in the membrane. This is an uncharacterized protein from Mycoplasma genitalium (strain ATCC 33530 / DSM 19775 / NCTC 10195 / G37) (Mycoplasmoides genitalium).